The primary structure comprises 554 residues: MGGFLSHLTPEQNVEALKASCGPVRGNIYKHDDVIVDGYLGIPYAKPPVGELRFKKPVTVDVWTEIKDCYKYGPACVQTGGFEQIAGPRTPTPEEAGCLTLNVFTPRNASSEFKNGRPVMVYIHGGGYELCASSDFCAYSLSGTLPLKDVVVVSINYRLGVFGFLTTGDNVCPGNFGLWDQTLALKWVQKHISSFGGDPNCVTVFGQSAGGASTDLLSLSPHSRDLFQRFIPISGTAHCDFAIRASENQAKIFREFAEFHGFSGRDSSALFKWYQEQSPETLSNVKGYKKSISGFLTFIPNLDGDFFPKPLDELRKEAPKKQMMTGVTEYEGLMLASMNPAFSPADVGLTLMPQGIYGKDVVSNPDEIQKIFYEKYVEGVDKSDELAMRKKLCEALGDEFFNVGVIQAAKNAAKHGNEVYFYTFEYVNPDSFGMWDGMMPFKAAVHCTELRYLLGEGVYSKFEPTEEDRKVMETTTTLFSNFAKYGNPNGKGATAEIWEKYSLNRPERHYRISYPKCEMRDVYHEGRIQFLEKIDGDSDKYQELVYGKKKSAKI.

The N-myristoyl glycine moiety is linked to residue Gly-2. A disulfide bond links Cys-76 and Cys-98. Ser-208 (acyl-ester intermediate) is an active-site residue. Active-site charge relay system residues include Glu-331 and His-446.

Belongs to the type-B carboxylesterase/lipase family.

It is found in the cytoplasm. The protein resides in the cell membrane. It catalyses the reaction a carboxylic ester + H2O = an alcohol + a carboxylate + H(+). The chain is Esterase cest-33 from Caenorhabditis elegans.